The chain runs to 280 residues: Killer cell lectin-like receptor 7 (280 aa).

Topologically, residues 1–44 are cytoplasmic; that stretch reads MSEQEVTYSTVRFHESSRLQKLVRTEEPQRPREACYREYSVPWK. Residues 45 to 66 traverse the membrane as a helical; Signal-anchor for type II membrane protein segment; it reads LIVIACGILCFLLLVTVALLAI. At 67 to 280 the chain is on the extracellular side; it reads TIFQHSQQKH…CGKRLDKFPH (214 aa). Asn-104 is a glycosylation site (N-linked (GlcNAc...) asparagine). A C-type lectin domain is found at 156-275; sequence GFEKYWFCYG…SYICICGKRL (120 aa). 4 disulfide bridges follow: Cys-163-Cys-168, Cys-181-Cys-269, Cys-185-Cys-271, and Cys-250-Cys-263. An N-linked (GlcNAc...) asparagine glycan is attached at Asn-239.

Homodimer; disulfide-linked.

The protein resides in the membrane. In terms of biological role, receptor on natural killer (NK) cells for class I MHC. The chain is Killer cell lectin-like receptor 7 (Klra7) from Mus musculus (Mouse).